The sequence spans 122 residues: uncharacterized protein (122 aa).

This is an uncharacterized protein from Escherichia coli O157:H7.